The primary structure comprises 172 residues: Shikimate kinase (172 aa).

Residue 11 to 16 coordinates ATP; that stretch reads GAGKST. Ser15 is a binding site for Mg(2+). 3 residues coordinate substrate: Asp33, Arg57, and Gly79. Arg117 serves as a coordination point for ATP. Arg136 lines the substrate pocket. An ATP-binding site is contributed by Arg153.

Belongs to the shikimate kinase family. As to quaternary structure, monomer. The cofactor is Mg(2+).

The protein resides in the cytoplasm. It catalyses the reaction shikimate + ATP = 3-phosphoshikimate + ADP + H(+). It participates in metabolic intermediate biosynthesis; chorismate biosynthesis; chorismate from D-erythrose 4-phosphate and phosphoenolpyruvate: step 5/7. Its function is as follows. Catalyzes the specific phosphorylation of the 3-hydroxyl group of shikimic acid using ATP as a cosubstrate. The chain is Shikimate kinase from Pseudomonas aeruginosa (strain LESB58).